Reading from the N-terminus, the 305-residue chain is Probable lipid kinase YegS-like (305 aa).

The region spanning 2 to 134 (HPPAPALLII…DLAKVNDQRY (133 aa)) is the DAGKc domain. ATP contacts are provided by residues Thr-40, 66–72 (GDGTINE), and Thr-95. Mg(2+) contacts are provided by Leu-215, Asp-218, and Leu-220. Residue Glu-271 is the Proton acceptor of the active site.

This sequence belongs to the diacylglycerol/lipid kinase family. YegS lipid kinase subfamily. Requires Mg(2+) as cofactor. Ca(2+) serves as cofactor.

The protein resides in the cytoplasm. In terms of biological role, probably phosphorylates lipids; the in vivo substrate is unknown. In Serratia proteamaculans (strain 568), this protein is Probable lipid kinase YegS-like.